We begin with the raw amino-acid sequence, 230 residues long: Ribosomal RNA small subunit methyltransferase G (230 aa).

S-adenosyl-L-methionine is bound by residues glycine 91, leucine 96, 142-143 (VE), and arginine 161.

This sequence belongs to the methyltransferase superfamily. RNA methyltransferase RsmG family.

The protein localises to the cytoplasm. The catalysed reaction is guanosine(527) in 16S rRNA + S-adenosyl-L-methionine = N(7)-methylguanosine(527) in 16S rRNA + S-adenosyl-L-homocysteine. In terms of biological role, specifically methylates the N7 position of guanine in position 527 of 16S rRNA. This is Ribosomal RNA small subunit methyltransferase G from Burkholderia pseudomallei (strain K96243).